The chain runs to 446 residues: D(1A) dopamine receptor (446 aa).

Topologically, residues 1 to 23 are extracellular; sequence MRTLNTSTMEGTGLVAERDFSFR. Asn-5 is a glycosylation site (N-linked (GlcNAc...) asparagine). Residues 24 to 49 traverse the membrane as a helical segment; sequence ILTACFLSLLILSTLLGNTLVCAAVI. Residues 50 to 60 are Cytoplasmic-facing; sequence RFRHLRSKVTN. Residues 61 to 87 form a helical membrane-spanning segment; that stretch reads FFVISLAVSDLLVAVLVMPWKAVAEIA. Residues 88 to 96 lie on the Extracellular side of the membrane; the sequence is GFWPFGSFC. Residues Cys-96 and Cys-186 are joined by a disulfide bond. Residues 97-119 form a helical membrane-spanning segment; the sequence is NIWVAFDIMCSTASILNLCVISV. The Cytoplasmic portion of the chain corresponds to 120–138; it reads DRYWAISSPFRYERKMTPK. Residues 139-163 form a helical membrane-spanning segment; sequence AAFILISVAWTLSVLISFIPVQLSW. Residues 164–192 are Extracellular-facing; it reads HKAKPTGPSEGNATSLGKTINNCDSSLSR. The N-linked (GlcNAc...) asparagine glycan is linked to Asn-175. The chain crosses the membrane as a helical span at residues 193-218; it reads TYAISSSLISFYIPVAIMIVTYTRIY. At 219-272 the chain is on the cytoplasmic side; sequence RIAQKQIRRISALERAAVHAKNCQTTTGNGNPMECSQPESSFKMSFKRETKVLK. Residues 273–299 form a helical membrane-spanning segment; it reads TLSVIMGVFVCCWLPFFILNCMVPFCG. At 300 to 312 the chain is on the extracellular side; sequence SGETKPFCIDSIT. Residues 313 to 337 traverse the membrane as a helical segment; the sequence is FDVFVWFGWANSSLNPIIYAFNADF. At 338–446 the chain is on the cytoplasmic side; it reads RKAFSTLLGC…PITQNGQHPT (109 aa). S-palmitoyl cysteine attachment occurs at residues Cys-347 and Cys-351.

The protein belongs to the G-protein coupled receptor 1 family. Interacts with DNAJC14 via its C-terminus. Interacts with DRD2. Interacts with DORIP1.

The protein localises to the cell membrane. Its subcellular location is the endoplasmic reticulum membrane. The protein resides in the cell projection. It localises to the cilium membrane. It is found in the dendrite. The protein localises to the dendritic spine. Dopamine receptor whose activity is mediated by G proteins which activate adenylyl cyclase. This Bos taurus (Bovine) protein is D(1A) dopamine receptor (DRD1).